A 595-amino-acid chain; its full sequence is Coagulation factor XII (595 aa).

An N-terminal signal peptide occupies residues 1-19 (MTALLFLGSLLMSLDLTLS). The 49-residue stretch at 41–89 (VDGKLCHFPFQYHRRLYHKCIHKGQPGSRPWCATTPNFDEDQQWGYCLE) folds into the Fibronectin type-II domain. 13 disulfides stabilise this stretch: cysteine 46/cysteine 72, cysteine 60/cysteine 87, cysteine 97/cysteine 109, cysteine 103/cysteine 118, cysteine 120/cysteine 129, cysteine 134/cysteine 162, cysteine 160/cysteine 169, cysteine 177/cysteine 188, cysteine 182/cysteine 197, cysteine 199/cysteine 208, cysteine 216/cysteine 294, cysteine 237/cysteine 276, and cysteine 265/cysteine 289. Positions 93-130 (VKDHCSKHSPCHKGGTCVNTPNGPHCLCPEHLTGKHCQ) constitute an EGF-like 1 domain. Threonine 108 is a glycosylation site (O-linked (Fuc) threonine). In terms of domain architecture, Fibronectin type-I spans 132-172 (EKCFESQLLKFFHENEIWFRTGPGGVARCQCKGPQAVCKLL). The region spanning 173–209 (TSQVCRVNPCLNGGTCLLVEDHRLCHCPAGYAGPFCD) is the EGF-like 2 domain. Residues 215-294 (TCYEDRGLSY…SWDYCDLEQC (80 aa)) enclose the Kringle domain. Residue asparagine 248 is glycosylated (N-linked (GlcNAc...) asparagine). The O-linked (GalNAc...) threonine glycan is linked to threonine 298. The disordered stretch occupies residues 302–332 (PVSPESHDMLKPRPPILQSSPRDSTRNQNVV). The O-linked (GalNAc...) serine glycan is linked to serine 307. The span at 318 to 332 (LQSSPRDSTRNQNVV) shows a compositional bias: polar residues. An O-linked (GalNAc...) threonine glycan is attached at threonine 326. Cystine bridges form between cysteine 340/cysteine 466, cysteine 378/cysteine 394, cysteine 386/cysteine 455, cysteine 417/cysteine 420, cysteine 480/cysteine 549, cysteine 512/cysteine 528, and cysteine 539/cysteine 570. The region spanning 354–594 (VVGGLVALPG…YLDWIQEHTA (241 aa)) is the Peptidase S1 domain. Histidine 393 acts as the Charge relay system in catalysis. Asparagine 414 carries an N-linked (GlcNAc...) asparagine glycan. The Charge relay system role is filled by aspartate 442. Serine 543 serves as the catalytic Charge relay system.

Belongs to the peptidase S1 family. As to quaternary structure, interacts with HRG; the interaction, which is enhanced in the presence of zinc ions and inhibited by heparin-binding, inhibits factor XII autoactivation and contact-initiated coagulation. Post-translationally, O- and N-glycosylated.

The protein resides in the secreted. It carries out the reaction Selective cleavage of Arg-|-Ile bonds in factor VII to form factor VIIa and factor XI to form factor XIa.. Its activity is regulated as follows. Activity is promoted in the presence of negatively charged surfaces. Its function is as follows. Factor XII is a serum glycoprotein that participates in the initiation of blood coagulation, fibrinolysis, and the generation of bradykinin and angiotensin. Prekallikrein is cleaved by factor XII to form kallikrein, which then cleaves factor XII first to alpha-factor XIIa and then trypsin cleaves it to beta-factor XIIa. Alpha-factor XIIa activates factor XI to factor XIa. The polypeptide is Coagulation factor XII (F12) (Rattus norvegicus (Rat)).